A 473-amino-acid polypeptide reads, in one-letter code: Photosystem II CP43 reaction center protein (473 aa).

The propeptide occupies 1 to 14; that stretch reads MKTLYSLRRFYPVE. Threonine 15 is modified (N-acetylthreonine). Residue threonine 15 is modified to Phosphothreonine. 5 helical membrane-spanning segments follow: residues 69–93, 134–155, 178–200, 255–275, and 291–312; these read LFEV…PHLA, LLGP…KDRN, KALY…RKIT, KPFA…LSYS, and WFNN…ASQA. Residue glutamate 367 coordinates [CaMn4O5] cluster. Residues 447–471 form a helical membrane-spanning segment; the sequence is RARAAAAGFEKGIDRDFEPVLSMTP.

The protein belongs to the PsbB/PsbC family. PsbC subfamily. In terms of assembly, PSII is composed of 1 copy each of membrane proteins PsbA, PsbB, PsbC, PsbD, PsbE, PsbF, PsbH, PsbI, PsbJ, PsbK, PsbL, PsbM, PsbT, PsbX, PsbY, PsbZ, Psb30/Ycf12, at least 3 peripheral proteins of the oxygen-evolving complex and a large number of cofactors. It forms dimeric complexes. It depends on Binds multiple chlorophylls and provides some of the ligands for the Ca-4Mn-5O cluster of the oxygen-evolving complex. It may also provide a ligand for a Cl- that is required for oxygen evolution. PSII binds additional chlorophylls, carotenoids and specific lipids. as a cofactor.

Its subcellular location is the plastid. The protein resides in the chloroplast thylakoid membrane. Functionally, one of the components of the core complex of photosystem II (PSII). It binds chlorophyll and helps catalyze the primary light-induced photochemical processes of PSII. PSII is a light-driven water:plastoquinone oxidoreductase, using light energy to abstract electrons from H(2)O, generating O(2) and a proton gradient subsequently used for ATP formation. This is Photosystem II CP43 reaction center protein from Vitis vinifera (Grape).